We begin with the raw amino-acid sequence, 360 residues long: Protein Wnt-2 (360 aa).

A signal peptide spans 1-25 (MNAPLGGIWLWLPLLLTWLTPEVNS). 11 disulfide bridges follow: Cys-76/Cys-87, Cys-127/Cys-135, Cys-137/Cys-157, Cys-206/Cys-220, Cys-208/Cys-215, Cys-278/Cys-309, Cys-294/Cys-304, Cys-308/Cys-348, Cys-324/Cys-339, Cys-326/Cys-336, and Cys-331/Cys-332. A lipid anchor (O-palmitoleoyl serine; by PORCN) is attached at Ser-212. An N-linked (GlcNAc...) asparagine glycan is attached at Asn-295.

This sequence belongs to the Wnt family. In terms of processing, palmitoleoylation is required for efficient binding to frizzled receptors. Depalmitoleoylation leads to Wnt signaling pathway inhibition.

Its subcellular location is the secreted. The protein localises to the extracellular space. It is found in the extracellular matrix. Functionally, ligand for members of the frizzled family of seven transmembrane receptors. Functions in the canonical Wnt signaling pathway that results in activation of transcription factors of the TCF/LEF family. Functions as a upstream regulator of FGF10 expression. Plays an important role in embryonic lung development. May contribute to embryonic brain development by regulating the proliferation of dopaminergic precursors and neurons. This Nomascus leucogenys (Northern white-cheeked gibbon) protein is Protein Wnt-2 (WNT2).